Consider the following 417-residue polypeptide: Cobalamin binding intrinsic factor (417 aa).

An N-terminal signal peptide occupies residues Met-1 to Thr-18. Cystine bridges form between Cys-26/Cys-246, Cys-103/Cys-288, and Cys-143/Cys-182. Asp-171 contacts cob(II)alamin. Position 191 is a phosphoserine (Ser-191). Residue Asn-209 is glycosylated (N-linked (GlcNAc...) asparagine). 2 residues coordinate cob(II)alamin: Asp-222 and Gln-270. N-linked (GlcNAc...) asparagine glycosylation is found at Asn-311 and Asn-330. Residues Ser-365–Val-370 and Trp-386–Leu-395 each bind cob(II)alamin. The N-linked (GlcNAc...) asparagine glycan is linked to Asn-413.

The protein belongs to the eukaryotic cobalamin transport proteins family. As to quaternary structure, interacts with CUBN (via CUB domains). The N-terminus is blocked. As to expression, gastric mucosa.

It localises to the secreted. Its function is as follows. Promotes absorption of the essential vitamin cobalamin (Cbl) in the ileum. After interaction with CUBN, the CBLIF-cobalamin complex is internalized via receptor-mediated endocytosis. The sequence is that of Cobalamin binding intrinsic factor from Rattus norvegicus (Rat).